Here is a 616-residue protein sequence, read N- to C-terminus: Chaperone protein HscA (616 aa).

This sequence belongs to the heat shock protein 70 family.

Functionally, chaperone involved in the maturation of iron-sulfur cluster-containing proteins. Has a low intrinsic ATPase activity which is markedly stimulated by HscB. Involved in the maturation of IscU. The chain is Chaperone protein HscA from Yersinia enterocolitica serotype O:8 / biotype 1B (strain NCTC 13174 / 8081).